Here is a 26-residue protein sequence, read N- to C-terminus: Unknown protein 16 (26 aa).

Positions 1–26 (AINSESGVRSVVPQPCNALPNQGPEK) are disordered.

The sequence is that of Unknown protein 16 from Pseudotsuga menziesii (Douglas-fir).